Here is a 114-residue protein sequence, read N- to C-terminus: Propane 2-monooxygenase, effector component (114 aa).

Belongs to the TmoD/XamoD family. As to quaternary structure, the propane 2-monooxygenase multicomponent enzyme system is composed of an electron transfer component and a monooxygenase component interacting with the effector protein MimD. The electron transfer component is composed of a reductase (MimB), and the monooxygenase component is formed by a large subunit (MimA) and a small subunit (MimC).

Its function is as follows. Effector component of the propane 2-monooxygenase multicomponent enzyme system which is involved in the degradation of propane via the O2-dependent hydroxylation of propane. In Mycolicibacterium smegmatis (strain ATCC 700084 / mc(2)155) (Mycobacterium smegmatis), this protein is Propane 2-monooxygenase, effector component.